A 481-amino-acid polypeptide reads, in one-letter code: Extracellular exo-alpha-(1-&gt;5)-L-arabinofuranosidase (481 aa).

The signal sequence occupies residues 1-27 (MRRLTVRLFTAVLAALALLTMGTPAHA). Positions 37–336 (FTNPLAEKRA…KVYWNADGTP (300 aa)) are catalytic. Residue Asp47 is the Proton acceptor of the active site. Asn186 contacts substrate. Residue Glu223 is the Proton donor of the active site. Substrate is bound by residues His287, Arg321, 363-366 (HWDF), Asp379, 457-460 (HYEN), and Asp475. The interval 349-479 (VRFSSYNYPD…ALDRQDATFY (131 aa)) is ABD.

The protein belongs to the glycosyl hydrolase 43 family.

It is found in the secreted. The enzyme catalyses Hydrolysis of terminal non-reducing alpha-L-arabinofuranoside residues in alpha-L-arabinosides.. It participates in glycan metabolism; L-arabinan degradation. Functionally, involved in the degradation of arabinan and is a key enzyme in the complete degradation of the plant cell wall. Catalyzes only the cleavage of terminal alpha-(1-&gt;5) arabinofuranosyl bonds of arabinan present in the arabinofuranosyl polysaccharides or oligosaccharides. It cannot act on other arabinose-containing polysaccharides and arabinoxylo-oligosaccharides. The sequence is that of Extracellular exo-alpha-(1-&gt;5)-L-arabinofuranosidase from Streptomyces avermitilis (strain ATCC 31267 / DSM 46492 / JCM 5070 / NBRC 14893 / NCIMB 12804 / NRRL 8165 / MA-4680).